The sequence spans 493 residues: E3 ubiquitin-protein ligase TRIM35 (493 aa).

N-acetylmethionine is present on Met1. 2 positions are modified to phosphoserine: Ser4 and Ser8. Residues 21–61 form an RING-type zinc finger; it reads CAVCYDPFRDAVTLRCGHNFCRGCVSRCWEVQVSPTCPVCK. Residues 96–137 form a B box-type zinc finger; sequence RFSRVCRLHRGQLSLFCLEDKELLCCSCQADPRHQGHRVQPV. Cys101, His104, Cys123, and His129 together coordinate Zn(2+). Positions 210 to 251 form a coiled coil; that stretch reads AEETRQKQLLADEKMKQLTEETEVLAHEIERLQMEMKEDDVS. The B30.2/SPRY domain maps to 284–487; the sequence is LGSLQYRVWK…LRICPLHISV (204 aa).

This sequence belongs to the TRIM/RBCC family. As to quaternary structure, interacts with PKM isoform M2, but not isoform M1; this interaction may compete with that between PKM and FGFR1, and hence reduces FGFR1-dependent tyrosine phosphorylation of PKM. Interacts with IRF7; this interaction promotes IRF7 proteasomal degradation. Interacts with TRAF3; this interaction promotes TRAF3 activation.

It is found in the cytoplasm. It localises to the nucleus. It carries out the reaction S-ubiquitinyl-[E2 ubiquitin-conjugating enzyme]-L-cysteine + [acceptor protein]-L-lysine = [E2 ubiquitin-conjugating enzyme]-L-cysteine + N(6)-ubiquitinyl-[acceptor protein]-L-lysine.. It participates in protein modification; protein ubiquitination. Functionally, E3 ubiquitin-protein ligase that participates in multiple biological processes including cell death, glucose metabolism, and in particular, the innate immune response. Mediates 'Lys-63'-linked polyubiquitination of TRAF3 thereby promoting type I interferon production via RIG-I signaling pathway. Can also catalyze 'Lys-48'-linked polyubiquitination and proteasomal degradation of viral proteins such as influenza virus PB2. Acts as a negative feedback regulator of TLR7- and TLR9-triggered signaling. Mechanistically, promotes the 'Lys-48'-linked ubiquitination of IRF7 and induces its degradation via a proteasome-dependent pathway. Reduces FGFR1-dependent tyrosine phosphorylation of PKM, inhibiting PKM-dependent lactate production, glucose metabolism, and cell growth. The sequence is that of E3 ubiquitin-protein ligase TRIM35 (TRIM35) from Homo sapiens (Human).